A 316-amino-acid chain; its full sequence is Protoheme IX farnesyltransferase (316 aa).

A run of 9 helical transmembrane segments spans residues 32 to 52, 53 to 73, 98 to 118, 120 to 140, 153 to 173, 180 to 200, 226 to 246, 251 to 271, and 280 to 300; these read VMSL…THVN, PIIG…SGAL, VARE…VITL, FVAN…YVVI, IVIG…AVAG, LALF…LALV, ILLY…IGFA, GLLS…VYLA, and VAMR…AAIV.

Belongs to the UbiA prenyltransferase family. Protoheme IX farnesyltransferase subfamily.

It is found in the cell inner membrane. It catalyses the reaction heme b + (2E,6E)-farnesyl diphosphate + H2O = Fe(II)-heme o + diphosphate. The protein operates within porphyrin-containing compound metabolism; heme O biosynthesis; heme O from protoheme: step 1/1. In terms of biological role, converts heme B (protoheme IX) to heme O by substitution of the vinyl group on carbon 2 of heme B porphyrin ring with a hydroxyethyl farnesyl side group. This chain is Protoheme IX farnesyltransferase, found in Methylocella silvestris (strain DSM 15510 / CIP 108128 / LMG 27833 / NCIMB 13906 / BL2).